The following is a 901-amino-acid chain: Protein translocase subunit SecA (901 aa).

ATP is bound by residues glutamine 87, 105–109 (GEGKT), and aspartate 512. The segment at 859 to 901 (HQDDDSAAAAALAAQTGERKVGRNDPCPCGSGKKYKQCHGRLQ) is disordered. 4 residues coordinate Zn(2+): cysteine 885, cysteine 887, cysteine 896, and histidine 897. Basic residues predominate over residues 891–901 (KKYKQCHGRLQ).

This sequence belongs to the SecA family. In terms of assembly, monomer and homodimer. Part of the essential Sec protein translocation apparatus which comprises SecA, SecYEG and auxiliary proteins SecDF-YajC and YidC. The cofactor is Zn(2+).

The protein resides in the cell inner membrane. It localises to the cytoplasm. The enzyme catalyses ATP + H2O + cellular proteinSide 1 = ADP + phosphate + cellular proteinSide 2.. Functionally, part of the Sec protein translocase complex. Interacts with the SecYEG preprotein conducting channel. Has a central role in coupling the hydrolysis of ATP to the transfer of proteins into and across the cell membrane, serving both as a receptor for the preprotein-SecB complex and as an ATP-driven molecular motor driving the stepwise translocation of polypeptide chains across the membrane. The sequence is that of Protein translocase subunit SecA from Escherichia coli O6:K15:H31 (strain 536 / UPEC).